Here is a 603-residue protein sequence, read N- to C-terminus: Nuclear receptor subfamily 2 group C member 1 (603 aa).

Residues 1–178 (MATIEEIAHQ…RLQRCIAFGM (178 aa)) form a required for interaction with KAT2B region. The nuclear receptor DNA-binding region spans 110-185 (FDLCVVCGDK…FGMKQDSVQC (76 aa)). 2 NR C4-type zinc fingers span residues 113–133 (CVVCGDKASGRHYGAVTCEGC) and 149–168 (CRGSKDCIINKHHRNRCQYC). Ser-197 and Ser-215 each carry phosphoserine. Residue Thr-220 is modified to Phosphothreonine. Position 222 is a phosphothreonine; by MAPK1 (Thr-222). Residue Lys-250 forms a Glycyl lysine isopeptide (Lys-Gly) (interchain with G-Cter in SUMO); alternate linkage. Lys-250 participates in a covalent cross-link: Glycyl lysine isopeptide (Lys-Gly) (interchain with G-Cter in SUMO2); alternate. The 243-residue stretch at 348–590 (GSVHLITGDS…SVIPHILKME (243 aa)) folds into the NR LBD domain. Phosphoserine; by PKC is present on Ser-581. The interval 584–603 (PHILKMEPADYNSQIIGHSI) is required for interaction with NRIP1. Lys-588 participates in a covalent cross-link: Glycyl lysine isopeptide (Lys-Gly) (interchain with G-Cter in SUMO2).

Belongs to the nuclear hormone receptor family. NR2 subfamily. Homodimer. Heterodimer; binds DNA as a heterodimer with NR2C2 required for chromatin remodeling and for binding to promoter regions such as globin DR1 repeats. Interacts with ESR1; the interaction prevents homodimerization of ESR1 and suppresses its transcriptional activity and cell growth. Interacts with NRIP1 (via its LXXLL motifs); the interaction provides corepressor activity. Interacts with HDAC3 (via the DNA-binding domain). Interacts with HDAC4 (via the DNA-binding domain). Interacts with PIAS1; the interaction is required for sumoylation of NR2C1. Interacts with UBE2I; the interaction is required for sumoylation of NR2C1. Interacts with KAT2B; the interaction acts as a corepressor of gene expression. In terms of processing, sumoylation requires both PIAS1 and UBE2I. Sumoylation appears to dissociate NR2C1 from the PML nuclear bodies. Enhances the interaction with NRIP1 but inhibits interaction with KAT2B. In proliferating cells, stimulation by all-trans retinoic acid, activation of MAPK1-mediated phosphorylation and recruitment to PML bodies with subsequent sumoylation, suppresses OCT4 expression. Post-translationally, phosphorylated on several serine and threonine residues. Phosphorylation on Thr-220, stimulated by all-trans retinoic acid (atRA) mediates PML location and sumoylation in proliferating cells which then modulates its association with effector molecules, KAT2B and NRIP1. Phosphorylation on Ser-581 by PKC is important for protein stability and function as activator of RARB.

The protein resides in the nucleus. It localises to the PML body. Orphan nuclear receptor. Binds the IR7 element in the promoter of its own gene in an autoregulatory negative feedback mechanism. Primarily repressor of a broad range of genes. Binds to hormone response elements (HREs) consisting of two 5'-AGGTCA-3' half site direct repeat consensus sequences. Together with NR2C2, forms the core of the DRED (direct repeat erythroid-definitive) complex that represses embryonic and fetal globin transcription. Also activator of OCT4 gene expression. May be involved in stem cell proliferation and differentiation. Mediator of retinoic acid-regulated preadipocyte proliferation. The polypeptide is Nuclear receptor subfamily 2 group C member 1 (NR2C1) (Macaca fascicularis (Crab-eating macaque)).